A 264-amino-acid polypeptide reads, in one-letter code: Putative hydro-lyase cgR_2449 (264 aa).

This sequence belongs to the D-glutamate cyclase family.

In Corynebacterium glutamicum (strain R), this protein is Putative hydro-lyase cgR_2449.